A 152-amino-acid chain; its full sequence is Putative rho GDP-dissociation inhibitor 2 (152 aa).

Belongs to the Rho GDI family.

The protein resides in the cytoplasm. In terms of biological role, regulates the GDP/GTP exchange reaction of the Rho proteins by inhibiting the dissociation of GDP from them, and the subsequent binding of GTP to them. The sequence is that of Putative rho GDP-dissociation inhibitor 2 (rdiB) from Dictyostelium discoideum (Social amoeba).